The sequence spans 658 residues: DNA mismatch repair protein MutL (658 aa).

Over residues 114 to 130 the composition is skewed to basic and acidic residues; it reads RQEDSSHATQVKAEDGK. 3 disordered regions span residues 114 to 137, 369 to 401, and 438 to 457; these read RQED…PTAA, DYPT…APQQ, and FGNM…LSDG.

It belongs to the DNA mismatch repair MutL/HexB family.

This protein is involved in the repair of mismatches in DNA. It is required for dam-dependent methyl-directed DNA mismatch repair. May act as a 'molecular matchmaker', a protein that promotes the formation of a stable complex between two or more DNA-binding proteins in an ATP-dependent manner without itself being part of a final effector complex. The polypeptide is DNA mismatch repair protein MutL (Neisseria meningitidis serogroup A / serotype 4A (strain DSM 15465 / Z2491)).